Here is a 613-residue protein sequence, read N- to C-terminus: DNA mismatch repair protein MutL (613 aa).

This sequence belongs to the DNA mismatch repair MutL/HexB family.

This protein is involved in the repair of mismatches in DNA. It is required for dam-dependent methyl-directed DNA mismatch repair. May act as a 'molecular matchmaker', a protein that promotes the formation of a stable complex between two or more DNA-binding proteins in an ATP-dependent manner without itself being part of a final effector complex. This Janthinobacterium sp. (strain Marseille) (Minibacterium massiliensis) protein is DNA mismatch repair protein MutL.